A 199-amino-acid polypeptide reads, in one-letter code: Gene 66 protein (199 aa).

The chain is Gene 66 protein (66) from Mycobacterium (Mycobacteriophage D29).